Reading from the N-terminus, the 212-residue chain is ER lumen protein-retaining receptor 1 (212 aa).

Over 1–4 (MNLF) the chain is Lumenal. The helical transmembrane segment at 5-24 (RFLGDLSHLLAIILLLLKIW) threads the bilayer. Topologically, residues 25-32 (KSRSCAGI) are cytoplasmic. Residues 33-52 (SGKSQVLFAVVFTARYLDLF) traverse the membrane as a helical segment. An interaction with the K-D-E-L motif on target proteins region spans residues 47–48 (RY). At 53 to 58 (TNYISL) the chain is on the lumenal side. A helical transmembrane segment spans residues 59–79 (YNTCMKVVYIACSFTTVWMIY). The Cytoplasmic segment spans residues 80 to 92 (SKFKATYDGNHDT). A helical transmembrane segment spans residues 93–110 (FRVEFLVIPTAILAFLVN). The Lumenal segment spans residues 111–116 (HDFTPL). A helical membrane pass occupies residues 117–135 (EILWTFSIYLESVAILPQL). At 136–149 (FMVSKTGEAETITS) the chain is on the cytoplasmic side. A helical membrane pass occupies residues 150-168 (HYLFALGVYRTLYLFNWIW). An interaction with the K-D-E-L motif on target proteins region spans residues 159-169 (RTLYLFNWIWR). Residues 169 to 178 (RYHFEGFFDL) are Lumenal-facing. The helical transmembrane segment at 179-199 (IAIVAGLVQTVLYCDFFYLYI) threads the bilayer. At 200–212 (TKVLKGKKLSLPA) the chain is on the cytoplasmic side. The tract at residues 204–207 (KGKK) is important for recycling of cargo proteins with the sequence motif K-D-E-L from the Golgi to the endoplasmic reticulum. S209 is subject to Phosphoserine; by PKA.

This sequence belongs to the ERD2 family. In terms of assembly, upon ligand binding the receptor oligomerizes and interacts with components of the transport machinery such as ARFGAP1 and ARF1. Phosphorylation by PKA at Ser-209 is required for endoplasmic reticulum retention function.

It is found in the golgi apparatus membrane. Its subcellular location is the cytoplasmic vesicle. The protein localises to the COPI-coated vesicle membrane. It localises to the endoplasmic reticulum membrane. The protein resides in the endoplasmic reticulum-Golgi intermediate compartment membrane. Receptor for the C-terminal sequence motif K-D-E-L that is present on endoplasmic reticulum resident proteins and that mediates their recycling from the Golgi back to the endoplasmic reticulum. The protein is ER lumen protein-retaining receptor 1 (KDELR1) of Bos taurus (Bovine).